Here is a 225-residue protein sequence, read N- to C-terminus: NAD(P)H-quinone oxidoreductase subunit K, chloroplastic (225 aa).

Residues cysteine 43, cysteine 44, cysteine 108, and cysteine 139 each contribute to the [4Fe-4S] cluster site.

It belongs to the complex I 20 kDa subunit family. NDH is composed of at least 16 different subunits, 5 of which are encoded in the nucleus. Requires [4Fe-4S] cluster as cofactor.

It is found in the plastid. The protein localises to the chloroplast thylakoid membrane. The catalysed reaction is a plastoquinone + NADH + (n+1) H(+)(in) = a plastoquinol + NAD(+) + n H(+)(out). The enzyme catalyses a plastoquinone + NADPH + (n+1) H(+)(in) = a plastoquinol + NADP(+) + n H(+)(out). Functionally, NDH shuttles electrons from NAD(P)H:plastoquinone, via FMN and iron-sulfur (Fe-S) centers, to quinones in the photosynthetic chain and possibly in a chloroplast respiratory chain. The immediate electron acceptor for the enzyme in this species is believed to be plastoquinone. Couples the redox reaction to proton translocation, and thus conserves the redox energy in a proton gradient. In Nuphar advena (Common spatterdock), this protein is NAD(P)H-quinone oxidoreductase subunit K, chloroplastic.